A 483-amino-acid polypeptide reads, in one-letter code: Arginine/agmatine antiporter (483 aa).

A run of 12 helical transmembrane segments spans residues 11–33 (ILGTLALTGIVISYMIGGGIFSL), 48–70 (LAWMLSGIGIFFIANTFKTLSII), 90–112 (VGFTIAWGYWLCQIFGNVGYAVI), 127–149 (GGNTIPAILLGSLLIWIFNYIVL), 156–178 (SFVNIIGVVCTLIPLLLFILITA), 209–228 (TMLVTLWAFIGIEGAVVISG), 241–263 (ILGFSGCLLIYVLLSLLPFGSLF), 293–315 (TGLLIAVLTSWLSWTILASEIPY), 335–357 (APSFSLFMTSGLMQITMLLVYFS), 367–389 (ITGVMVLPAYLTSSLFLVKFSLS), 415–435 (LWLIYAGGLQHLFMVAILLAL), and 458–477 (EILKMTIMALAALLAIFLFS).

This sequence belongs to the amino acid-polyamine-organocation (APC) superfamily. Basic amino acid/polyamine antiporter (APA) (TC 2.A.3.2) family.

It is found in the cell inner membrane. Functionally, catalyzes the exchange of L-arginine for agmatine. The arginine uptake by the bacterium in the macrophage may be a virulence factor against the host innate immune response. This Chlamydia trachomatis serovar L2 (strain ATCC VR-902B / DSM 19102 / 434/Bu) protein is Arginine/agmatine antiporter (aaxC).